The following is a 363-amino-acid chain: Aspartate-semialdehyde dehydrogenase (363 aa).

NADP(+) is bound by residues threonine 15, glycine 16, serine 17, valine 18, serine 40, serine 43, and leucine 87. Cysteine 154 acts as the Acyl-thioester intermediate in catalysis. Residue glycine 186 participates in NADP(+) binding. Residue histidine 251 is the Proton acceptor of the active site. Asparagine 341 provides a ligand contact to NADP(+).

Belongs to the aspartate-semialdehyde dehydrogenase family. Homotetramer; dimer of dimers.

It is found in the cytoplasm. The protein resides in the cytosol. Its subcellular location is the nucleus. The enzyme catalyses L-aspartate 4-semialdehyde + phosphate + NADP(+) = 4-phospho-L-aspartate + NADPH + H(+). Its pathway is amino-acid biosynthesis; L-methionine biosynthesis via de novo pathway; L-homoserine from L-aspartate: step 2/3. It participates in amino-acid biosynthesis; L-threonine biosynthesis; L-threonine from L-aspartate: step 2/5. With respect to regulation, inhibited by 4-amino-3-hydroxynaphthalene-1-sulfonic acid and the competitive inhibitor 1,4-benzoquinone and derivates such as 2-chloro-3-methoxy-1,4-naphthoquinone, 2,3-dichloro-1,4-naphthoquinone, 2-chloro-1,4-naphthoquinone, 2-bromo-1,4-naphthoquinone and 2,3-dichloro-5,8-dihydroxy-1,4-naphthoquinone. Functionally, catalyzes the NADPH-dependent formation of L-aspartate 4-semialdehyde (L-ASA) by the reductive dephosphorylation of 4-phospho-L-aspartate. Mediates the second step in the biosynthesis of amino acids that derive from aspartate (the aspartate family of amino acids), including methioinine and threonine, the latter of which is a precursor to isoleucine. The chain is Aspartate-semialdehyde dehydrogenase from Aspergillus fumigatus (strain ATCC MYA-4609 / CBS 101355 / FGSC A1100 / Af293) (Neosartorya fumigata).